The primary structure comprises 125 residues: Fluoride-specific ion channel FluC (125 aa).

3 helical membrane-spanning segments follow: residues 36–56 (GTIFVNVVGSFLLSFLMFLSI), 65–85 (FILFFGTGFLGAFTTFSTFAY), and 99–119 (IIYFIANIFLGFFAAILGMFL). Na(+) is bound by residues G75 and T78.

This sequence belongs to the fluoride channel Fluc/FEX (TC 1.A.43) family.

It localises to the cell inner membrane. It carries out the reaction fluoride(in) = fluoride(out). Its activity is regulated as follows. Na(+) is not transported, but it plays an essential structural role and its presence is essential for fluoride channel function. Fluoride-specific ion channel. Important for reducing fluoride concentration in the cell, thus reducing its toxicity. The polypeptide is Fluoride-specific ion channel FluC (Thermosipho africanus (strain TCF52B)).